We begin with the raw amino-acid sequence, 840 residues long: Transient receptor potential cation channel subfamily V member 1 (840 aa).

The segment covering 1-12 (MKNWGSSDSGGS) has biased composition (low complexity). The segment at 1–43 (MKNWGSSDSGGSEDPPQEDSCLDPLDGDPNSRPVPAKPHIFPT) is disordered. At 1–433 (MKNWGSSDSG…QDKWDRFVKR (433 aa)) the chain is on the cytoplasmic side. 2 ANK repeats span residues 111–139 (KLYDRRKIFEAVAQNNCEELQSLLLFLQK) and 154–186 (TGKTCLLKAMLNLHDGQNDTIPLLLEIARQTDS). ATP contacts are provided by residues Arg116, Lys156, Lys161, Asn165, 200 to 203 (YKGQ), and 211 to 212 (ER). 4 ANK repeats span residues 204 to 229 (TALHIAIERRNMALVTLLVENGADVQ), 250 to 277 (ELPLSLAACTNQLGIVKFLLQNSWQPAD), 286 to 322 (NTVLHALVEVADNTADNTKFVTSMYNEILILGAKLHP), and 336 to 359 (TPLALAARSGKIGVLAYILQREIQ). Phosphothreonine; by PKA; in vitro is present on Thr371. One copy of the ANK 7 repeat lies at 394 to 416 (NSVLEVIAYSSSETPNRHDMLLV). Residues 434–455 (IFYFNFFIYCLYMIIFTTAAYY) form a helical membrane-spanning segment. Residues 456-473 (RPVDGLPPYKLKHTVGDY) lie on the Extracellular side of the membrane. Residues 474 to 498 (FRVTGEILSVLGGVYFFFRGIQYFL) traverse the membrane as a helical segment. The Cytoplasmic segment spans residues 499–511 (QRRPSLKTLFVDS). Ser503 is subject to Phosphoserine; by PKC/PRKCE. 512–513 (YS) serves as a coordination point for resiniferatoxin. Residues 512 to 533 (YSEMLFFVQSLFMLGTVVLYFC) traverse the membrane as a helical segment. Over 534 to 536 (HHK) the chain is Extracellular. The helical transmembrane segment at 537–557 (EYVASMVFSLAMGWTNMLYYT) threads the bilayer. Residues Thr551 and Arg558 each contribute to the resiniferatoxin site. At 558–560 (RGF) the chain is on the cytoplasmic side. Residues 561–599 (QQMGIYAVMIEKMILRDLCRFMFVYLVFLFGFSTAVVTL) form a helical membrane-spanning segment. At 600 to 631 (IEDGKNNSVPTESTLHRWRGPGCRPPDSSYNS) the chain is on the extracellular side. Asn605 is a glycosylation site (N-linked (GlcNAc...) asparagine). The segment at residues 632-653 (LYSTCLELFKFTIGMGDLEFTE) is an intramembrane region (pore-forming). Gly645 provides a ligand contact to Na(+). Residues 645–648 (GMGD) carry the Selectivity filter motif. Asp648 contributes to the Ca(2+) binding site. The Extracellular portion of the chain corresponds to 654-657 (NYDF). A helical transmembrane segment spans residues 658-684 (KAVFIILLLAYVILTYILLLNMLIALM). The Cytoplasmic segment spans residues 685–840 (GETVNKIAQE…FKDPVGLGEK (156 aa)). Residues 686–714 (ETVNKIAQESKNIWKLQRAITILDTEKSF) are AD. Thr706 bears the Phosphothreonine mark. The tract at residues 769 to 803 (EGIKRTLSFSLRSGRVSGRNWKNFSLVPLLRDAST) is interaction with calmodulin. Position 776 is a phosphoserine (Ser776). Residues 779 to 794 (LRSGRVSGRNWKNFSL) form a required for PIP2-mediated channel inhibition region. Ser802 carries the post-translational modification Phosphoserine; by PKC/PRKCE and PKC/PRKCZ. The residue at position 822 (Ser822) is a Phosphoserine.

It belongs to the transient receptor (TC 1.A.4) family. TrpV subfamily. TRPV1 sub-subfamily. As to quaternary structure, homotetramer. Interacts with PIRT. May also form a heteromeric channel with TRPV3. Interacts with CALM, PRKCM and CSK. Interacts with PRKCG and NTRK1, probably by forming a trimeric complex. Interacts with the Scolopendra mutilans RhTx toxin. Interacts with TMEM100. Interacts with PACS2. Post-translationally, phosphorylation by PKA reverses capsaicin-induced dephosphorylation at multiple sites. Phosphorylation by CAMKII seems to regulate binding to vanilloids. Phosphorylated and modulated by PRKCE, PRKCM and probably PRKCZ. Dephosphorylation by calcineurin seems to lead to receptor desensitization and phosphorylation by CAMKII recovers activity.

Its subcellular location is the postsynaptic cell membrane. It localises to the cell projection. The protein localises to the dendritic spine membrane. It is found in the cell membrane. It catalyses the reaction Ca(2+)(in) = Ca(2+)(out). The enzyme catalyses Mg(2+)(in) = Mg(2+)(out). It carries out the reaction Na(+)(in) = Na(+)(out). The catalysed reaction is K(+)(in) = K(+)(out). Its activity is regulated as follows. Channel activity is activated via the interaction with PIRT and phosphatidylinositol 4,5-bisphosphate (PIP2). Both PIRT and PIP2 are required to activate channel activity. The channel is sensitized by ATP binding. Repeated stimulation with capsaicin gives rise to progressively smaller responses, due to desensitization. This desensitization is triggered by the influx of calcium ions and is inhibited by elevated ATP levels. Ca(2+) and CALM displace ATP from its binding site and trigger a conformation change that leads to a closed, desensitized channel. Intracellular PIP2 inhibits desensitization. The double-knot toxin (DkTx) from the Chinese earth tiger tarantula activates the channel and traps it in an open conformation. The Scolopendra mutilans RhTx toxin potentiates the heat activation pathway mediated by this channel by binding to the charge-rich outer pore region (in an activated state). Its function is as follows. Non-selective calcium permeant cation channel involved in detection of noxious chemical and thermal stimuli. Seems to mediate proton influx and may be involved in intracellular acidosis in nociceptive neurons. Involved in mediation of inflammatory pain and hyperalgesia. Sensitized by a phosphatidylinositol second messenger system activated by receptor tyrosine kinases, which involves PKC isozymes and PCL. Activated by vanilloids, like capsaicin, and temperatures higher than 42 degrees Celsius. Upon activation, exhibits a time- and Ca(2+)-dependent outward rectification, followed by a long-lasting refractory state. Mild extracellular acidic pH (6.5) potentiates channel activation by noxious heat and vanilloids, whereas acidic conditions (pH &lt;6) directly activate the channel. Can be activated by endogenous compounds, including 12-hydroperoxytetraenoic acid and bradykinin. Acts as ionotropic endocannabinoid receptor with central neuromodulatory effects. Triggers a form of long-term depression (TRPV1-LTD) mediated by the endocannabinoid anandamine in the hippocampus and nucleus accumbens by affecting AMPA receptors endocytosis. In Canis lupus familiaris (Dog), this protein is Transient receptor potential cation channel subfamily V member 1 (TRPV1).